The primary structure comprises 258 residues: Large ribosomal subunit protein uL15c (258 aa).

A chloroplast-targeting transit peptide spans 1 to 65; that stretch reads MSAASLIPVS…NVKSSGENVR (65 aa). The segment at 67–90 is disordered; the sequence is RLDNLGPQPGSRKRPKRKGRGIAA. Over residues 77 to 86 the composition is skewed to basic residues; sequence SRKRPKRKGR.

This sequence belongs to the universal ribosomal protein uL15 family. As to quaternary structure, part of the 50S ribosomal subunit.

It localises to the plastid. Its subcellular location is the chloroplast. The polypeptide is Large ribosomal subunit protein uL15c (RPL15) (Pisum sativum (Garden pea)).